The sequence spans 193 residues: dCTP deaminase (193 aa).

DCTP contacts are provided by residues 110–115, aspartate 128, 136–138, tyrosine 171, lysine 178, and glutamine 182; these read RSSLAR and VLE. The Proton donor/acceptor role is filled by glutamate 138. The segment at 169 to 193 is disordered; that stretch reads RPYNSRQDAKYRGQQGAVASRIDKD.

It belongs to the dCTP deaminase family. Homotrimer.

It carries out the reaction dCTP + H2O + H(+) = dUTP + NH4(+). Its pathway is pyrimidine metabolism; dUMP biosynthesis; dUMP from dCTP (dUTP route): step 1/2. Catalyzes the deamination of dCTP to dUTP. The polypeptide is dCTP deaminase (Yersinia pestis bv. Antiqua (strain Antiqua)).